Reading from the N-terminus, the 81-residue chain is Photosystem I iron-sulfur center (81 aa).

4Fe-4S ferredoxin-type domains lie at 2–31 (SHSVKIYDTCIGCTQCVRACPLDVLEMVPW) and 37–68 (GQIASSPRTEDCIGCKRCETACPTDFLSVRVY). The [4Fe-4S] cluster site is built by cysteine 11, cysteine 14, cysteine 17, cysteine 21, cysteine 48, cysteine 51, cysteine 54, and cysteine 58.

As to quaternary structure, the cyanobacterial PSI reaction center is composed of one copy each of PsaA,B,C,D,E,F,I,J,K,L,M and X, and forms trimeric complexes. [4Fe-4S] cluster serves as cofactor.

The protein localises to the cellular thylakoid membrane. The catalysed reaction is reduced [plastocyanin] + hnu + oxidized [2Fe-2S]-[ferredoxin] = oxidized [plastocyanin] + reduced [2Fe-2S]-[ferredoxin]. In terms of biological role, apoprotein for the two 4Fe-4S centers FA and FB of photosystem I (PSI); essential for photochemical activity. FB is the terminal electron acceptor of PSI, donating electrons to ferredoxin. The C-terminus interacts with PsaA/B/D and helps assemble the protein into the PSI complex. Required for binding of PsaD and PsaE to PSI. PSI is a plastocyanin/cytochrome c6-ferredoxin oxidoreductase, converting photonic excitation into a charge separation, which transfers an electron from the donor P700 chlorophyll pair to the spectroscopically characterized acceptors A0, A1, FX, FA and FB in turn. The polypeptide is Photosystem I iron-sulfur center (Trichodesmium erythraeum (strain IMS101)).